The sequence spans 714 residues: Fatty acid oxidation complex subunit alpha (714 aa).

An enoyl-CoA hydratase region spans residues 1–190 (MEMASVFTLN…KLGLVDDVVP (190 aa)). The segment at 306–714 (APLNSVGILG…FWKTTATDLQ (409 aa)) is 3-hydroxyacyl-CoA dehydrogenase.

This sequence in the N-terminal section; belongs to the enoyl-CoA hydratase/isomerase family. The protein in the central section; belongs to the 3-hydroxyacyl-CoA dehydrogenase family. In terms of assembly, heterotetramer of two alpha chains (FadJ) and two beta chains (FadI).

The protein resides in the cytoplasm. It carries out the reaction a (3S)-3-hydroxyacyl-CoA = a (2E)-enoyl-CoA + H2O. It catalyses the reaction a 4-saturated-(3S)-3-hydroxyacyl-CoA = a (3E)-enoyl-CoA + H2O. The enzyme catalyses a (3S)-3-hydroxyacyl-CoA + NAD(+) = a 3-oxoacyl-CoA + NADH + H(+). The catalysed reaction is (3S)-3-hydroxybutanoyl-CoA = (3R)-3-hydroxybutanoyl-CoA. The protein operates within lipid metabolism; fatty acid beta-oxidation. Functionally, catalyzes the formation of a hydroxyacyl-CoA by addition of water on enoyl-CoA. Also exhibits 3-hydroxyacyl-CoA epimerase and 3-hydroxyacyl-CoA dehydrogenase activities. The polypeptide is Fatty acid oxidation complex subunit alpha (Escherichia coli (strain SE11)).